Reading from the N-terminus, the 359-residue chain is Outer membrane protein assembly factor BamC (359 aa).

The signal sequence occupies residues 1–21 (MSTLNKYKTLIIISSLAAVSS). A lipid anchor (N-palmitoyl cysteine) is attached at C22. Residue C22 is the site of S-diacylglycerol cysteine attachment.

The protein belongs to the BamC family. As to quaternary structure, part of the Bam complex.

It localises to the cell outer membrane. Part of the outer membrane protein assembly complex, which is involved in assembly and insertion of beta-barrel proteins into the outer membrane. This chain is Outer membrane protein assembly factor BamC, found in Kangiella koreensis (strain DSM 16069 / JCM 12317 / KCTC 12182 / SW-125).